Here is a 355-residue protein sequence, read N- to C-terminus: Putative beta-lactamase HcpE (355 aa).

The N-terminal stretch at 1–22 (MGVKFLKILVCGLFFWSLNAHL) is a signal peptide. TPR repeat units lie at residues 27–60 (DNSF…GVSE), 63–96 (TQLG…DDRE), 98–131 (CFGL…LKHP), 132–166 (ESCY…DMAK), 202–240 (GQAC…NNSG), 245–275 (LGSM…MGSA), 276–311 (VSCS…MGDE), and 312–344 (VGCF…GMKQ). 9 disulfides stabilise this stretch: C54/C62, C90/C98, C126/C134, C160/C168, C197/C205, C234/C242, C270/C278, C306/C314, and C338/C346.

This sequence belongs to the hcp beta-lactamase family.

Its subcellular location is the secreted. It catalyses the reaction a beta-lactam + H2O = a substituted beta-amino acid. May hydrolyze 6-aminopenicillinic acid and 7-aminocephalosporanic acid (ACA) derivatives. The protein is Putative beta-lactamase HcpE (hcpE) of Helicobacter pylori (strain ATCC 700392 / 26695) (Campylobacter pylori).